A 91-amino-acid chain; its full sequence is DNA-directed RNA polymerase subunit omega (91 aa).

The protein belongs to the RNA polymerase subunit omega family. In terms of assembly, the RNAP catalytic core consists of 2 alpha, 1 beta, 1 beta' and 1 omega subunit. When a sigma factor is associated with the core the holoenzyme is formed, which can initiate transcription.

The enzyme catalyses RNA(n) + a ribonucleoside 5'-triphosphate = RNA(n+1) + diphosphate. Promotes RNA polymerase assembly. Latches the N- and C-terminal regions of the beta' subunit thereby facilitating its interaction with the beta and alpha subunits. This is DNA-directed RNA polymerase subunit omega from Pectobacterium carotovorum subsp. carotovorum (strain PC1).